A 318-amino-acid chain; its full sequence is Acetyl-coenzyme A carboxylase carboxyl transferase subunit alpha (318 aa).

In terms of domain architecture, CoA carboxyltransferase C-terminal spans 31-292 (DLIKEVSALE…KDAILRQLEL (262 aa)).

Belongs to the AccA family. Acetyl-CoA carboxylase is a heterohexamer composed of biotin carboxyl carrier protein (AccB), biotin carboxylase (AccC) and two subunits each of ACCase subunit alpha (AccA) and ACCase subunit beta (AccD).

Its subcellular location is the cytoplasm. It carries out the reaction N(6)-carboxybiotinyl-L-lysyl-[protein] + acetyl-CoA = N(6)-biotinyl-L-lysyl-[protein] + malonyl-CoA. Its pathway is lipid metabolism; malonyl-CoA biosynthesis; malonyl-CoA from acetyl-CoA: step 1/1. Its function is as follows. Component of the acetyl coenzyme A carboxylase (ACC) complex. First, biotin carboxylase catalyzes the carboxylation of biotin on its carrier protein (BCCP) and then the CO(2) group is transferred by the carboxyltransferase to acetyl-CoA to form malonyl-CoA. The sequence is that of Acetyl-coenzyme A carboxylase carboxyl transferase subunit alpha from Hydrogenovibrio crunogenus (strain DSM 25203 / XCL-2) (Thiomicrospira crunogena).